The chain runs to 264 residues: Transmembrane protein 270 (264 aa).

Helical transmembrane passes span 31 to 51 (HLYR…LGLA), 74 to 94 (LSLA…LLLW), and 133 to 153 (LFLS…LLTW). The segment covering 227–236 (AQEVKSQETS) has biased composition (polar residues). The tract at residues 227 to 264 (AQEVKSQETSGPPPQFLIPESSTTESGPLPPQPETPGE) is disordered. Over residues 254–264 (PLPPQPETPGE) the composition is skewed to pro residues.

As to expression, testis.

The protein resides in the membrane. This chain is Transmembrane protein 270, found in Mus musculus (Mouse).